Here is a 483-residue protein sequence, read N- to C-terminus: Proline--tRNA ligase (483 aa).

It belongs to the class-II aminoacyl-tRNA synthetase family. ProS type 3 subfamily. As to quaternary structure, homodimer.

The protein localises to the cytoplasm. It carries out the reaction tRNA(Pro) + L-proline + ATP = L-prolyl-tRNA(Pro) + AMP + diphosphate. In terms of biological role, catalyzes the attachment of proline to tRNA(Pro) in a two-step reaction: proline is first activated by ATP to form Pro-AMP and then transferred to the acceptor end of tRNA(Pro). The protein is Proline--tRNA ligase of Mycoplasma genitalium (strain ATCC 33530 / DSM 19775 / NCTC 10195 / G37) (Mycoplasmoides genitalium).